The chain runs to 391 residues: Thioredoxin-interacting protein (391 aa).

Lys212 is covalently cross-linked (Glycyl lysine isopeptide (Lys-Gly) (interchain with G-Cter in ubiquitin)). A Phosphoserine modification is found at Ser361.

Belongs to the arrestin family. Homodimer; disulfide-linked. Interacts with TXN/thioredoxin through its redox-active site. Interacts with transcriptional repressors ZBTB16, ZBTB32 and HDAC1. Interacts with DDIT4. Ubiquitinated; undergoes heterotypic 'Lys-48'-/'Lys-63'-branched polyubiquitination catalyzed by ITCH and UBR5 resulting in proteasomal degradation. Deubiquitinated by USP5, leading to TXNIP stabilization.

The protein resides in the cytoplasm. May act as an oxidative stress mediator by inhibiting thioredoxin activity or by limiting its bioavailability. Interacts with COPS5 and restores COPS5-induced suppression of CDKN1B stability, blocking the COPS5-mediated translocation of CDKN1B from the nucleus to the cytoplasm. Functions as a transcriptional repressor, possibly by acting as a bridge molecule between transcription factors and corepressor complexes, and over-expression will induce G0/G1 cell cycle arrest. Required for the maturation of natural killer cells. Acts as a suppressor of tumor cell growth. Inhibits the proteasomal degradation of DDIT4, and thereby contributes to the inhibition of the mammalian target of rapamycin complex 1 (mTORC1). The chain is Thioredoxin-interacting protein (TXNIP) from Pongo abelii (Sumatran orangutan).